The sequence spans 308 residues: Isoflavone reductase-like protein (308 aa).

NADP(+) contacts are provided by residues 11–17, R36, and K45; that span reads GGTGYIG. The active-site Proton acceptor is K133. R137 provides a ligand contact to NADP(+).

Belongs to the NmrA-type oxidoreductase family. Isoflavone reductase subfamily. As to quaternary structure, homodimer.

Its subcellular location is the cytoplasm. The polypeptide is Isoflavone reductase-like protein (Olea europaea (Common olive)).